A 152-amino-acid chain; its full sequence is Peptide deformylase (152 aa).

2 residues coordinate Fe cation: Cys91 and His133. Glu134 is a catalytic residue. His137 is a binding site for Fe cation.

This sequence belongs to the polypeptide deformylase family. It depends on Fe(2+) as a cofactor.

The enzyme catalyses N-terminal N-formyl-L-methionyl-[peptide] + H2O = N-terminal L-methionyl-[peptide] + formate. Its function is as follows. Removes the formyl group from the N-terminal Met of newly synthesized proteins. Requires at least a dipeptide for an efficient rate of reaction. N-terminal L-methionine is a prerequisite for activity but the enzyme has broad specificity at other positions. This Wigglesworthia glossinidia brevipalpis protein is Peptide deformylase.